Consider the following 359-residue polypeptide: DNA replication and repair protein RecF (359 aa).

Residue 30–37 (GPNGSGKT) coordinates ATP.

Belongs to the RecF family.

The protein resides in the cytoplasm. Its function is as follows. The RecF protein is involved in DNA metabolism; it is required for DNA replication and normal SOS inducibility. RecF binds preferentially to single-stranded, linear DNA. It also seems to bind ATP. The chain is DNA replication and repair protein RecF from Aliivibrio fischeri (strain MJ11) (Vibrio fischeri).